Here is a 211-residue protein sequence, read N- to C-terminus: Holliday junction resolvase RecU (211 aa).

4 residues coordinate Mg(2+): T87, D89, D102, and Q121.

This sequence belongs to the RecU family. It depends on Mg(2+) as a cofactor.

The protein resides in the cytoplasm. It carries out the reaction Endonucleolytic cleavage at a junction such as a reciprocal single-stranded crossover between two homologous DNA duplexes (Holliday junction).. Functionally, endonuclease that resolves Holliday junction intermediates in genetic recombination. Cleaves mobile four-strand junctions by introducing symmetrical nicks in paired strands. Promotes annealing of linear ssDNA with homologous dsDNA. Required for DNA repair, homologous recombination and chromosome segregation. The sequence is that of Holliday junction resolvase RecU from Limosilactobacillus fermentum (strain NBRC 3956 / LMG 18251) (Lactobacillus fermentum).